Reading from the N-terminus, the 97-residue chain is DNA-directed RNA polymerase subunit omega (97 aa).

Belongs to the RNA polymerase subunit omega family. The RNAP catalytic core consists of 2 alpha, 1 beta, 1 beta' and 1 omega subunit. When a sigma factor is associated with the core the holoenzyme is formed, which can initiate transcription.

It catalyses the reaction RNA(n) + a ribonucleoside 5'-triphosphate = RNA(n+1) + diphosphate. Functionally, promotes RNA polymerase assembly. Latches the N- and C-terminal regions of the beta' subunit thereby facilitating its interaction with the beta and alpha subunits. In Coxiella burnetii (strain CbuK_Q154) (Coxiella burnetii (strain Q154)), this protein is DNA-directed RNA polymerase subunit omega.